The primary structure comprises 261 residues: Cytochrome c oxidase subunit 3 (261 aa).

Topologically, residues 1–15 (MAHQAHAYHMVDPSP) are mitochondrial matrix. A helical membrane pass occupies residues 16 to 34 (WPITGATAALLVTSGLAAW). At 35–40 (FHFNSM) the chain is on the mitochondrial intermembrane side. The chain crosses the membrane as a helical span at residues 41-66 (ILILMGLTLLLLTMYQWWRDIIREST). The Mitochondrial matrix portion of the chain corresponds to 67-72 (FQGHHT). The chain crosses the membrane as a helical span at residues 73–105 (LPVQKSLRYGMILFITSEVFFFLGFFWAFYHSS). Over 106–128 (LAPTPELGGLWPPTGITPLDPFE) the chain is Mitochondrial intermembrane. A helical transmembrane segment spans residues 129–152 (VPLLNTAVLLASGITVTWAHHSLM). Over 153–155 (EGQ) the chain is Mitochondrial matrix. The helical transmembrane segment at 156-183 (RKEAIQSLFITVLLGLYFTALQATEYYE) threads the bilayer. The Mitochondrial intermembrane segment spans residues 184-190 (SPFTIAD). The chain crosses the membrane as a helical span at residues 191–223 (GAYGSTFFVATGFHGLHVIIGSTFLIVCLVRQT). Residues 224–232 (QYHFTSNHH) lie on the Mitochondrial matrix side of the membrane. The helical transmembrane segment at 233–256 (FGFEAAAWYWHFVDVVWLFLYVSI) threads the bilayer. Over 257–261 (YWWGS) the chain is Mitochondrial intermembrane.

Belongs to the cytochrome c oxidase subunit 3 family. Component of the cytochrome c oxidase (complex IV, CIV), a multisubunit enzyme composed of 14 subunits. The complex is composed of a catalytic core of 3 subunits MT-CO1, MT-CO2 and MT-CO3, encoded in the mitochondrial DNA, and 11 supernumerary subunits COX4I, COX5A, COX5B, COX6A, COX6B, COX6C, COX7A, COX7B, COX7C, COX8 and NDUFA4, which are encoded in the nuclear genome. The complex exists as a monomer or a dimer and forms supercomplexes (SCs) in the inner mitochondrial membrane with NADH-ubiquinone oxidoreductase (complex I, CI) and ubiquinol-cytochrome c oxidoreductase (cytochrome b-c1 complex, complex III, CIII), resulting in different assemblies (supercomplex SCI(1)III(2)IV(1) and megacomplex MCI(2)III(2)IV(2)).

The protein resides in the mitochondrion inner membrane. It catalyses the reaction 4 Fe(II)-[cytochrome c] + O2 + 8 H(+)(in) = 4 Fe(III)-[cytochrome c] + 2 H2O + 4 H(+)(out). Component of the cytochrome c oxidase, the last enzyme in the mitochondrial electron transport chain which drives oxidative phosphorylation. The respiratory chain contains 3 multisubunit complexes succinate dehydrogenase (complex II, CII), ubiquinol-cytochrome c oxidoreductase (cytochrome b-c1 complex, complex III, CIII) and cytochrome c oxidase (complex IV, CIV), that cooperate to transfer electrons derived from NADH and succinate to molecular oxygen, creating an electrochemical gradient over the inner membrane that drives transmembrane transport and the ATP synthase. Cytochrome c oxidase is the component of the respiratory chain that catalyzes the reduction of oxygen to water. Electrons originating from reduced cytochrome c in the intermembrane space (IMS) are transferred via the dinuclear copper A center (CU(A)) of subunit 2 and heme A of subunit 1 to the active site in subunit 1, a binuclear center (BNC) formed by heme A3 and copper B (CU(B)). The BNC reduces molecular oxygen to 2 water molecules using 4 electrons from cytochrome c in the IMS and 4 protons from the mitochondrial matrix. This chain is Cytochrome c oxidase subunit 3 (MT-CO3), found in Latimeria chalumnae (Coelacanth).